The primary structure comprises 464 residues: Elongation factor 1-alpha (464 aa).

The tr-type G domain maps to 5 to 242 (KTHINIVVIG…DSVVPPQRPT (238 aa)). GTP is bound by residues 14 to 21 (GHVDSGKS), 91 to 95 (DAPGH), and 153 to 156 (NKMD). 5-glutamyl glycerylphosphorylethanolamine occurs at positions 301 and 374.

Belongs to the TRAFAC class translation factor GTPase superfamily. Classic translation factor GTPase family. EF-Tu/EF-1A subfamily.

The protein resides in the cytoplasm. Its function is as follows. This protein promotes the GTP-dependent binding of aminoacyl-tRNA to the A-site of ribosomes during protein biosynthesis. In Onchocerca volvulus, this protein is Elongation factor 1-alpha.